Reading from the N-terminus, the 475-residue chain is tRNA modification GTPase MnmE (475 aa).

The (6S)-5-formyl-5,6,7,8-tetrahydrofolate site is built by Arg24, Glu81, and Lys124. The TrmE-type G domain maps to Gly220–Gly397. Asn230 is a binding site for K(+). Residues Asn230–Ser235, Thr249–Thr255, Asp274–Gly277, and Ser378–Arg380 contribute to the GTP site. Residue Ser234 participates in Mg(2+) binding. Thr249, Ile251, and Thr254 together coordinate K(+). Thr255 is a Mg(2+) binding site. Lys475 provides a ligand contact to (6S)-5-formyl-5,6,7,8-tetrahydrofolate.

The protein belongs to the TRAFAC class TrmE-Era-EngA-EngB-Septin-like GTPase superfamily. TrmE GTPase family. Homodimer. Heterotetramer of two MnmE and two MnmG subunits. K(+) is required as a cofactor.

Its subcellular location is the cytoplasm. In terms of biological role, exhibits a very high intrinsic GTPase hydrolysis rate. Involved in the addition of a carboxymethylaminomethyl (cmnm) group at the wobble position (U34) of certain tRNAs, forming tRNA-cmnm(5)s(2)U34. The sequence is that of tRNA modification GTPase MnmE from Cupriavidus necator (strain ATCC 17699 / DSM 428 / KCTC 22496 / NCIMB 10442 / H16 / Stanier 337) (Ralstonia eutropha).